The sequence spans 684 residues: Pseudohemocyanin-1 (684 aa).

Residues 1–23 (SLVVAAAAASPYSGSHDFSGFQR) form the signal peptide. The tract at residues 7–32 (AAASPYSGSHDFSGFQRDEPDGVPTA) is disordered. Asn100, Asn193, Asn230, and Asn626 each carry an N-linked (GlcNAc...) asparagine glycan.

It belongs to the tyrosinase family. Hemocyanin subfamily. Hexamer. In terms of tissue distribution, strongly expressed in ovaries. Also expressed in heart. Not detected in hepatopancreas, gills, connective tissue or muscle.

Its function is as follows. Does not function as a hemocyanin. The polypeptide is Pseudohemocyanin-1 (Homarus americanus (American lobster)).